A 69-amino-acid polypeptide reads, in one-letter code: Large ribosomal subunit protein bL32c (69 aa).

It belongs to the bacterial ribosomal protein bL32 family.

Its subcellular location is the plastid. It is found in the chloroplast. The sequence is that of Large ribosomal subunit protein bL32c (rpl32) from Anthoceros angustus (Hornwort).